The chain runs to 47 residues: Delta-stichotoxin-Hcr1d (47 aa).

Disulfide bonds link cysteine 3–cysteine 43, cysteine 5–cysteine 33, and cysteine 26–cysteine 44.

Belongs to the sea anemone sodium channel inhibitory toxin family. Type II subfamily.

Its subcellular location is the secreted. It is found in the nematocyst. Binds to site 3 of voltage-gated sodium channels and inhibits the inactivation process. The polypeptide is Delta-stichotoxin-Hcr1d (Radianthus crispa (Leathery sea anemone)).